We begin with the raw amino-acid sequence, 570 residues long: MSKSRRVFLSMQGDDDFWGNGDRFEEHKLSKMNRRKCRGMMDTAKDDVLDEHFFKQNNLVTQELEQQNAKSNDMFRERQDWNSSTPLEKINLVESEDPVTCPENTEAKIHCSEVKVTEKMPLELDDEFYNNFREYFSSRPEVIFLTRSMHKDAAENYDKQFIDLYEKTRKRLELRSSPQINQILRCTSNTNATSSEIQLRNRQAVIVSNFREPDRRLGRYSKYYYHHNVGPEVYSRKVFVGGLPSCVKESDILNFFSRYGRLQVDWPSKHYECKSDSDPSLCNEPISSSSYQPSSHLAMVSPPFGEINPFMRNMPAQSESSQTGGFGRISSGSIGGFLNPGMAQVARGNLGFGSTKSDGSINGDKRQHHLGYVFLLFEKERSVRDLVLDCFEEEEGLFITLESSTDSIRVQIRPWLLADAEFLMDFNVPINTKLVAFIGGVPRPLKAVELAHFFEQTYGHVVCVGIDIDNKFKYPRGSGRVAFSDYDAYVQAITDRYIVLDHEDIHKRVEIKPYFFHNQSCEECSGRYHRQHAPYFCPSLECFQYYCEPCWHKMHSHPSRFHHMPVVKGV.

Positions L434–F516 constitute an RRM domain.

In terms of tissue distribution, expressed specifically in the spermatogenic germ line.

In terms of biological role, cytoplasmic polyadenylation element binding protein that binds to and regulates the translation of specific mRNAs. Not required for oogenesis. In Caenorhabditis elegans, this protein is Cytoplasmic polyadenylation element-binding protein 2 (cpb-2).